The chain runs to 77 residues: Apelin (77 aa).

An N-terminal signal peptide occupies residues 1–22; that stretch reads MNLRLCVQALLLLWLSLTAVCG. Positions 23–41 are excised as a propeptide; it reads GSLMPLPDGNGLEDGNVRH. The interval 43-77 is disordered; it reads VQPRGSRNGPGPWQGGRRKFRRQRPRLSHKGPMPF. Positions 58–71 are enriched in basic residues; that stretch reads GRRKFRRQRPRLSH.

Belongs to the apelin family. Several active peptides may be produced by proteolytic processing of the peptide precursor. As to expression, expressed in the brain with highest levels in the frontal cortex, thalamus, hypothalamus and midbrain. Secreted by the mammary gland into the colostrum and the milk.

Its subcellular location is the secreted. The protein localises to the extracellular space. Its function is as follows. Peptide hormone that functions as endogenous ligand for the G-protein-coupled apelin receptor (APLNR/APJ), that plays a role in cadiovascular homeostasis. Functions as a balanced agonist activating both G(i) protein pathway and beta-arrestin pathway of APLNR. Downstream G proteins activation, apelin can inhibit cAMP production and activate key intracellular effectors such as ERKs. On the other hand, APLNR activation induces beta-arrestin recruitment to the membrane leading to desensitization and internalization of the receptor. Apelin blunts cardiac hypertrophic induction from APLNR on response to pathological stimuli, but also induces myocardial hypertrophy under normal conditions. Apelin-36 dissociates more hardly than (pyroglu)apelin-13 from APLNR. Involved in the regulation of cardiac precursor cell movements during gastrulation and heart morphogenesis. Has an inhibitory effect on cytokine production in response to T-cell receptor/CD3 cross-linking; the oral intake of apelin in the colostrum and the milk might therefore modulate immune responses in neonates. Plays a role in early coronary blood vessels formation. Mediates myocardial contractility in an ERK1/2-dependent manner. May also have a role in the central control of body fluid homeostasis by influencing vasopressin release and drinking behavior. Functionally, (Microbial infection) Endogenous ligand for the apelin receptor (APLNR), an alternative coreceptor with CD4 for HIV-1 infection. Inhibits HIV-1 entry in cells coexpressing CD4 and APLNR. Apelin-36 has a greater inhibitory activity on HIV infection than other synthetic apelin derivatives. The protein is Apelin of Homo sapiens (Human).